Reading from the N-terminus, the 148-residue chain is SsrA-binding protein (148 aa).

The interval 123–148 (KLHDKRETEKKRDWEREKARIMRSAT) is disordered. The segment covering 126–142 (DKRETEKKRDWEREKAR) has biased composition (basic and acidic residues).

This sequence belongs to the SmpB family.

The protein resides in the cytoplasm. In terms of biological role, required for rescue of stalled ribosomes mediated by trans-translation. Binds to transfer-messenger RNA (tmRNA), required for stable association of tmRNA with ribosomes. tmRNA and SmpB together mimic tRNA shape, replacing the anticodon stem-loop with SmpB. tmRNA is encoded by the ssrA gene; the 2 termini fold to resemble tRNA(Ala) and it encodes a 'tag peptide', a short internal open reading frame. During trans-translation Ala-aminoacylated tmRNA acts like a tRNA, entering the A-site of stalled ribosomes, displacing the stalled mRNA. The ribosome then switches to translate the ORF on the tmRNA; the nascent peptide is terminated with the 'tag peptide' encoded by the tmRNA and targeted for degradation. The ribosome is freed to recommence translation, which seems to be the essential function of trans-translation. The polypeptide is SsrA-binding protein (Burkholderia thailandensis (strain ATCC 700388 / DSM 13276 / CCUG 48851 / CIP 106301 / E264)).